A 186-amino-acid polypeptide reads, in one-letter code: MINRNANRDRDRSRSNDKELKINYRIKAREVRVIFENGTQEVLSIEDAIKKAKEAGLDLVEVSPNVSPPVCKIIDYGKYKFHQEKRQKEQKKNQKVIKLKEVRMQPKIDAHDLDFKSKNILGFLKDGNKVKVTIRFRGRELAHTYLGYGILNSILEKVGDVNYVLESAAKMEGKTMFLIVAPKFKK.

It belongs to the IF-3 family. As to quaternary structure, monomer.

Its subcellular location is the cytoplasm. IF-3 binds to the 30S ribosomal subunit and shifts the equilibrium between 70S ribosomes and their 50S and 30S subunits in favor of the free subunits, thus enhancing the availability of 30S subunits on which protein synthesis initiation begins. This Borreliella burgdorferi (strain ATCC 35210 / DSM 4680 / CIP 102532 / B31) (Borrelia burgdorferi) protein is Translation initiation factor IF-3.